The primary structure comprises 129 residues: uncharacterized protein (129 aa).

C2H2-type zinc fingers lie at residues 75–99 (FVCPLCLMPFSSSVSLKQHIRYTEH) and 101–124 (KVCPVCKKEFTSTDSALDHVCKKH).

Its function is as follows. Essential for virus function. This is an uncharacterized protein from Saccharolobus solfataricus (Sulfolobus solfataricus).